A 471-amino-acid chain; its full sequence is Adenosylhomocysteinase (471 aa).

Substrate-binding residues include Thr-60, Asp-135, and Glu-196. 197 to 199 (TTT) lines the NAD(+) pocket. Residues Lys-226 and Asp-230 each coordinate substrate. NAD(+) is bound by residues Asn-231, 260-265 (GYGDVG), Glu-283, Asn-318, 339-341 (IGH), and Asn-387.

The protein belongs to the adenosylhomocysteinase family. The cofactor is NAD(+).

Its subcellular location is the cytoplasm. It carries out the reaction S-adenosyl-L-homocysteine + H2O = L-homocysteine + adenosine. It functions in the pathway amino-acid biosynthesis; L-homocysteine biosynthesis; L-homocysteine from S-adenosyl-L-homocysteine: step 1/1. May play a key role in the regulation of the intracellular concentration of adenosylhomocysteine. The protein is Adenosylhomocysteinase of Pelodictyon phaeoclathratiforme (strain DSM 5477 / BU-1).